Consider the following 130-residue polypeptide: Sigma-w pathway protein YsdB (130 aa).

A helical membrane pass occupies residues 2 to 22; that stretch reads FVMVLRIILLALFAYCIYAVV.

The protein resides in the membrane. May mediate a negative feedback loop that down-regulates the expression of the sigma-W regulon following the activation of sigma-W in response to conditions of cell envelope stress. Might interact with and inhibit the activity of the protease PrsW, or could bind to the anti-sigma-W factor RsiW and thereby protect it from PrsW-mediated cleavage. The protein is Sigma-w pathway protein YsdB (ysdB) of Bacillus subtilis (strain 168).